We begin with the raw amino-acid sequence, 216 residues long: Splicing factor U2AF 23 kDa subunit (216 aa).

The C3H1-type 1 zinc finger occupies 12–40; sequence EQDKVNCSFYYKIGACRHGERCSRKHVKP. The RRM domain occupies 44 to 141; it reads QTILCPNMYK…RPVYAELSPV (98 aa). The C3H1-type 2 zinc-finger motif lies at 143 to 170; it reads DFREACCRQHETSECQRGGLCNFMHAKK. Positions 194–216 are disordered; it reads EMKKEPNSDSTNRWVSVTAERKN.

In terms of assembly, forms a heterodimer with the U2AF large subunit. Can also form a homodimer. U2AF large subunit (U2AF59), U2AF small subunit (U2AF23) and SF1 (bpb1) interact to form a complex required for complex A formation. Interacts with cwf13.

The protein localises to the nucleus. Functionally, necessary for the splicing of pre-mRNA. The SF1-U2AF59-U2AF23 complex has a role in the recognition of the branch site (5'-UACUAAC-3'), the pyrimidine tract and the 3'-splice site at the 3'-end of introns. In Schizosaccharomyces pombe (strain 972 / ATCC 24843) (Fission yeast), this protein is Splicing factor U2AF 23 kDa subunit.